Consider the following 373-residue polypeptide: Erythronate-4-phosphate dehydrogenase (373 aa).

Positions 45 and 66 each coordinate substrate. The NAD(+) site is built by Asp146 and Thr175. Residue Arg208 is part of the active site. NAD(+) is bound at residue Asp232. Residue Glu237 is part of the active site. His254 functions as the Proton donor in the catalytic mechanism. Gly257 provides a ligand contact to NAD(+). Tyr258 contributes to the substrate binding site.

It belongs to the D-isomer specific 2-hydroxyacid dehydrogenase family. PdxB subfamily. In terms of assembly, homodimer.

Its subcellular location is the cytoplasm. It carries out the reaction 4-phospho-D-erythronate + NAD(+) = (R)-3-hydroxy-2-oxo-4-phosphooxybutanoate + NADH + H(+). It participates in cofactor biosynthesis; pyridoxine 5'-phosphate biosynthesis; pyridoxine 5'-phosphate from D-erythrose 4-phosphate: step 2/5. Functionally, catalyzes the oxidation of erythronate-4-phosphate to 3-hydroxy-2-oxo-4-phosphonooxybutanoate. The chain is Erythronate-4-phosphate dehydrogenase from Serratia proteamaculans (strain 568).